The sequence spans 451 residues: Phosphoglucosamine mutase (451 aa).

Serine 102 serves as the catalytic Phosphoserine intermediate. Mg(2+) is bound by residues serine 102, aspartate 242, aspartate 244, and aspartate 246. At serine 102 the chain carries Phosphoserine.

Belongs to the phosphohexose mutase family. It depends on Mg(2+) as a cofactor. Post-translationally, activated by phosphorylation.

It carries out the reaction alpha-D-glucosamine 1-phosphate = D-glucosamine 6-phosphate. Its function is as follows. Catalyzes the conversion of glucosamine-6-phosphate to glucosamine-1-phosphate. The protein is Phosphoglucosamine mutase of Staphylococcus carnosus (strain TM300).